The chain runs to 178 residues: Large ribosomal subunit protein uL6 (178 aa).

It belongs to the universal ribosomal protein uL6 family. Part of the 50S ribosomal subunit.

In terms of biological role, this protein binds to the 23S rRNA, and is important in its secondary structure. It is located near the subunit interface in the base of the L7/L12 stalk, and near the tRNA binding site of the peptidyltransferase center. The polypeptide is Large ribosomal subunit protein uL6 (Campylobacter curvus (strain 525.92)).